A 209-amino-acid chain; its full sequence is 3-demethoxyubiquinol 3-hydroxylase (209 aa).

The span at 23–36 shows a compositional bias: low complexity; sequence PHATRAAPAPAQAP. The segment at 23–42 is disordered; it reads PHATRAAPAPAQAPGEMTDS. The Fe cation site is built by Glu-58, Glu-88, His-91, Glu-140, Glu-172, and His-175.

Belongs to the COQ7 family. Fe cation serves as cofactor.

It localises to the cell membrane. The enzyme catalyses a 5-methoxy-2-methyl-3-(all-trans-polyprenyl)benzene-1,4-diol + AH2 + O2 = a 3-demethylubiquinol + A + H2O. The protein operates within cofactor biosynthesis; ubiquinone biosynthesis. Catalyzes the hydroxylation of 2-nonaprenyl-3-methyl-6-methoxy-1,4-benzoquinol during ubiquinone biosynthesis. This chain is 3-demethoxyubiquinol 3-hydroxylase, found in Variovorax paradoxus (strain S110).